We begin with the raw amino-acid sequence, 20 residues long: Maximin-Ht (20 aa).

It belongs to the bombinin family. In terms of tissue distribution, expressed by the skin glands.

It is found in the secreted. Its function is as follows. Has antimicrobial activity. This chain is Maximin-Ht, found in Bombina maxima (Giant fire-bellied toad).